Here is a 468-residue protein sequence, read N- to C-terminus: MTDRPRLRLHDTAAGAVRDFVPLRDGHVSIYLCGATVQGLPHIGHVRSGVAFDILRRWLIALGYDVAFIRNVTDIDDKILNKAAAAGRPWWEWAATYERAFSAAYDALDVLPPSAEPRATGHITQMVELIERLIEKGHAYTGDGDVYFDVLSYPEYGQLSGHRIDDVHQGEGVASGKRDQRDFTLWKGAKPGEPSWPTPWGRGRPGWHTECVAMAHEYLGPEFDIHCGGMDLVFPHHENEIAQSRAAGDGFARYWLHNGWVTMGGEKMSKSLGNVLAIPAMLQRVRPAELRYYLGSAHYRSMLEFSDTALQDAVKAYVGVEEFLHRVRVRVGAVEPGEPNPRFADALNDDLAVPAALAEVHQARAEGNRALDSGDHEGALRQARSIRAMMGILGCDPLHERWETRDETSAALAAVDVLVRAELQNREKAREQRNWALADEIRNRLKQAGIEVTDTADGPQWTLGGDGK.

Cysteine 33 provides a ligand contact to Zn(2+). The short motif at 35-45 (ATVQGLPHIGH) is the 'HIGH' region element. Zn(2+) contacts are provided by cysteine 211, histidine 236, and glutamate 240. Positions 267-271 (KMSKS) match the 'KMSKS' region motif. Lysine 270 is a binding site for ATP.

The protein belongs to the class-I aminoacyl-tRNA synthetase family. Monomer. Requires Zn(2+) as cofactor.

Its subcellular location is the cytoplasm. It carries out the reaction tRNA(Cys) + L-cysteine + ATP = L-cysteinyl-tRNA(Cys) + AMP + diphosphate. This Mycolicibacterium paratuberculosis (strain ATCC BAA-968 / K-10) (Mycobacterium paratuberculosis) protein is Cysteine--tRNA ligase.